Consider the following 222-residue polypeptide: uncharacterized protein (222 aa).

A disordered region spans residues 142–222; it reads ARRGGCVHPP…LPDPPSAGHL (81 aa). The segment covering 160-169 has biased composition (low complexity); it reads QSRSISSRRA. Residues 182 to 196 are compositionally biased toward basic residues; sequence PRRRPHRHRTRPQTR.

This sequence belongs to the Rv1128c/1148c/1588c/1702c/1945/3466 family.

This is an uncharacterized protein from Mycobacterium tuberculosis (strain CDC 1551 / Oshkosh).